A 431-amino-acid polypeptide reads, in one-letter code: Glutamate-1-semialdehyde 2,1-aminomutase (431 aa).

Lys-265 is modified (N6-(pyridoxal phosphate)lysine).

The protein belongs to the class-III pyridoxal-phosphate-dependent aminotransferase family. HemL subfamily. In terms of assembly, homodimer. Pyridoxal 5'-phosphate serves as cofactor.

Its subcellular location is the cytoplasm. The catalysed reaction is (S)-4-amino-5-oxopentanoate = 5-aminolevulinate. It functions in the pathway porphyrin-containing compound metabolism; protoporphyrin-IX biosynthesis; 5-aminolevulinate from L-glutamyl-tRNA(Glu): step 2/2. The chain is Glutamate-1-semialdehyde 2,1-aminomutase from Vibrio vulnificus (strain YJ016).